A 129-amino-acid polypeptide reads, in one-letter code: Small ribosomal subunit protein uS11 (129 aa).

The protein belongs to the universal ribosomal protein uS11 family. Part of the 30S ribosomal subunit. Interacts with proteins S7 and S18. Binds to IF-3.

Functionally, located on the platform of the 30S subunit, it bridges several disparate RNA helices of the 16S rRNA. Forms part of the Shine-Dalgarno cleft in the 70S ribosome. This chain is Small ribosomal subunit protein uS11, found in Yersinia pseudotuberculosis serotype O:1b (strain IP 31758).